The chain runs to 154 residues: RNA-binding protein PAB1135 (154 aa).

As to quaternary structure, homodimer in solution.

Its function is as follows. In vitro, binds efficiently double-stranded RNAs in a non-sequence specific manner. The polypeptide is RNA-binding protein PAB1135 (Pyrococcus abyssi (strain GE5 / Orsay)).